The chain runs to 417 residues: Proteasome-activating nucleotidase (417 aa).

Positions 24 to 78 (SKYLLDRVKQLEERNVRLKEEYRKIELEKKSVENKKVQYEREIRKLTSELDRLKT) form a coiled coil. Residues 203–208 (GTGKTL) and histidine 342 each bind ATP. Residues 415–417 (MFA) are docks into pockets in the proteasome alpha-ring to cause gate opening.

It belongs to the AAA ATPase family. Homohexamer. The hexameric complex has a two-ring architecture resembling a top hat that caps the 20S proteasome core at one or both ends. Upon ATP-binding, the C-terminus of PAN interacts with the alpha-rings of the proteasome core by binding to the intersubunit pockets.

The protein resides in the cytoplasm. ATPase which is responsible for recognizing, binding, unfolding and translocation of substrate proteins into the archaeal 20S proteasome core particle. Is essential for opening the gate of the 20S proteasome via an interaction with its C-terminus, thereby allowing substrate entry and access to the site of proteolysis. Thus, the C-termini of the proteasomal ATPase function like a 'key in a lock' to induce gate opening and therefore regulate proteolysis. Unfolding activity requires energy from ATP hydrolysis, whereas ATP binding alone promotes ATPase-20S proteasome association which triggers gate opening, and supports translocation of unfolded substrates. This is Proteasome-activating nucleotidase from Methanocella arvoryzae (strain DSM 22066 / NBRC 105507 / MRE50).